The sequence spans 647 residues: Threonine--tRNA ligase (647 aa).

The TGS domain occupies 1–61 (MIKITFPDGA…EEDGSIEIVT (61 aa)). Residues 240 to 538 (DHRKLGKELD…LIETYKGAFP (299 aa)) are catalytic. Zn(2+) is bound by residues C334, H385, and H515.

It belongs to the class-II aminoacyl-tRNA synthetase family. Homodimer. Zn(2+) serves as cofactor.

The protein localises to the cytoplasm. It carries out the reaction tRNA(Thr) + L-threonine + ATP = L-threonyl-tRNA(Thr) + AMP + diphosphate + H(+). Its function is as follows. Catalyzes the attachment of threonine to tRNA(Thr) in a two-step reaction: L-threonine is first activated by ATP to form Thr-AMP and then transferred to the acceptor end of tRNA(Thr). Also edits incorrectly charged L-seryl-tRNA(Thr). This chain is Threonine--tRNA ligase, found in Streptococcus pyogenes serotype M4 (strain MGAS10750).